The chain runs to 816 residues: Oxysterol-binding protein-related protein 1D (816 aa).

The PH domain maps to 92-229; the sequence is GAGVAGIMYK…WVEAFQVAKD (138 aa). Residues 290–321 adopt a coiled-coil conformation; the sequence is KHIILLDTLRQLETEKIELEATVVDETKEHDS. Residues 340-362 are disordered; it reads SASDSEADNESQDGADVESDEDD. A compositionally biased stretch (acidic residues) spans 344–362; that stretch reads SEADNESQDGADVESDEDD. Residues 735-764 are a coiled coil; the sequence is NGEYESANAEKLRLEQLQRQARRLQEKGWK.

The protein belongs to the OSBP family. Expressed in roots, leaves, stems and flowers.

Its function is as follows. May be involved in the transport of sterols. The protein is Oxysterol-binding protein-related protein 1D (ORP1D) of Arabidopsis thaliana (Mouse-ear cress).